The chain runs to 180 residues: Adenine phosphoribosyltransferase (180 aa).

The protein belongs to the purine/pyrimidine phosphoribosyltransferase family. In terms of assembly, homodimer.

It is found in the cytoplasm. The enzyme catalyses AMP + diphosphate = 5-phospho-alpha-D-ribose 1-diphosphate + adenine. It functions in the pathway purine metabolism; AMP biosynthesis via salvage pathway; AMP from adenine: step 1/1. Functionally, catalyzes a salvage reaction resulting in the formation of AMP, that is energically less costly than de novo synthesis. In Mycolicibacterium paratuberculosis (strain ATCC BAA-968 / K-10) (Mycobacterium paratuberculosis), this protein is Adenine phosphoribosyltransferase.